The following is a 304-amino-acid chain: tRNA dimethylallyltransferase (304 aa).

Glycine 16 to serine 23 is a binding site for ATP. Residue threonine 18–serine 23 participates in substrate binding. Interaction with substrate tRNA regions lie at residues aspartate 41–glutamine 44 and glutamine 165–arginine 169.

The protein belongs to the IPP transferase family. Monomer. Mg(2+) is required as a cofactor.

It carries out the reaction adenosine(37) in tRNA + dimethylallyl diphosphate = N(6)-dimethylallyladenosine(37) in tRNA + diphosphate. In terms of biological role, catalyzes the transfer of a dimethylallyl group onto the adenine at position 37 in tRNAs that read codons beginning with uridine, leading to the formation of N6-(dimethylallyl)adenosine (i(6)A). The protein is tRNA dimethylallyltransferase of Allorhizobium ampelinum (strain ATCC BAA-846 / DSM 112012 / S4) (Agrobacterium vitis (strain S4)).